The sequence spans 136 residues: Ribosome-binding factor A (136 aa).

This sequence belongs to the RbfA family. Monomer. Binds 30S ribosomal subunits, but not 50S ribosomal subunits or 70S ribosomes.

It is found in the cytoplasm. One of several proteins that assist in the late maturation steps of the functional core of the 30S ribosomal subunit. Associates with free 30S ribosomal subunits (but not with 30S subunits that are part of 70S ribosomes or polysomes). Required for efficient processing of 16S rRNA. May interact with the 5'-terminal helix region of 16S rRNA. This Cellvibrio japonicus (strain Ueda107) (Pseudomonas fluorescens subsp. cellulosa) protein is Ribosome-binding factor A.